The chain runs to 252 residues: UPF0246 protein Fjoh_4905 (252 aa).

Belongs to the UPF0246 family.

This chain is UPF0246 protein Fjoh_4905, found in Flavobacterium johnsoniae (strain ATCC 17061 / DSM 2064 / JCM 8514 / BCRC 14874 / CCUG 350202 / NBRC 14942 / NCIMB 11054 / UW101) (Cytophaga johnsonae).